Consider the following 4427-residue polypeptide: Dynein axonemal heavy chain 2 (4427 aa).

The tract at residues 1–73 (MSSKAEKKQR…AQSEESVEPE (73 aa)) is disordered. A stem region spans residues 1 to 1764 (MSSKAEKKQR…VIRQTNTQFQ (1764 aa)). A compositionally biased stretch (polar residues) spans 14 to 23 (RGSSQASWSG). The segment covering 50 to 59 (LPKEEPEPRL) has biased composition (basic and acidic residues). Residues 1404-1439 (EDNQVALSTMKASRFVKAFEKDVDHWERCLSLILEV) form a TPR 1 repeat. AAA regions lie at residues 1765–1986 (YNYE…LLRY), 2046–2273 (ETVE…DNCK), 2378–2625 (RYPP…VFQG), and 2722–2974 (EYNL…LRRH). ATP contacts are provided by residues 1803–1810 (GPAGTGKT), 2084–2091 (GCTGSGKT), and 2416–2423 (GPVGTGKT). The TPR 2 repeat unit spans residues 2721–2754 (NEYNLSPSVVPMQLVLFREAIEHITRIVRVIGQP). Position 2762-2769 (2762-2769 (GIGGSGRQ)) interacts with ATP. Positions 2989–3272 (YKKLLGEKRQ…EELRKKSEEM (284 aa)) are stalk. Positions 3012–3049 (FKIDETREKVQVMSLELEDAKKKVAEFQKQCEEYLVII) form a coiled coil. The stretch at 3072–3105 (VEEIKCQALADNAQKDLEEALPALEEAMRALESL) is one TPR 3 repeat. 2 coiled-coil regions span residues 3216–3304 (KRIR…EEDL) and 3523–3567 (VRKE…GSLL). 2 AAA regions span residues 3358-3588 (LCNP…EVTE) and 3804-4023 (VTSF…LLSL). TPR repeat units lie at residues 4072–4104 (STPF…LLPG) and 4105–4140 (MDPP…QPQI).

It belongs to the dynein heavy chain family. In terms of assembly, part of the axonemal inner dynein arm complex that consists of at least two heavy chains and a number of intermediate and light chains. Interacts with DNAI4. As to expression, expressed primarily in trachea and testis, 2 tissues containing axonemal structures. Also expressed in lung. Expressed in spermatozoa (at protein level).

The protein localises to the cytoplasm. The protein resides in the cytoskeleton. It is found in the cilium axoneme. Its subcellular location is the flagellum axoneme. Its function is as follows. As part of the axonemal inner dynein arm complex plays a central role in ciliary beat. Expressed in sperm flagellum, it is required for sperm motility. Dyneins are microtubule-based molecular motors possessing ATPase activities that can convert the chemical energy of ATP into relative sliding between adjacent microtubule doublets to generate ciliary bending. The protein is Dynein axonemal heavy chain 2 of Homo sapiens (Human).